We begin with the raw amino-acid sequence, 453 residues long: BPI fold-containing family B member 6 (453 aa).

The N-terminal stretch at 1–18 is a signal peptide; that stretch reads MLRILCLALCSLLTGTRA. Asn114 carries N-linked (GlcNAc...) asparagine glycosylation. Cys137 and Cys174 form a disulfide bridge. Residue Asn190 is glycosylated (N-linked (GlcNAc...) asparagine).

This sequence belongs to the BPI/LBP/Plunc superfamily. BPI/LBP family. As to expression, detected at very low levels in normal tonsils, and at higher levels in hypertrophic tonsils.

Its subcellular location is the secreted. This is BPI fold-containing family B member 6 (BPIFB6) from Homo sapiens (Human).